Reading from the N-terminus, the 307-residue chain is Oxygen-dependent coproporphyrinogen-III oxidase (307 aa).

Ser99 is a binding site for substrate. A divalent metal cation-binding residues include His103 and His113. The active-site Proton donor is the His113. 115-117 (NVR) provides a ligand contact to substrate. His152 and His182 together coordinate a divalent metal cation. Positions 247 to 282 (YVEFNLVFDRGTLFGLQSGGRTESILMSMPPVVNWR) are important for dimerization. 265 to 267 (GGR) is a binding site for substrate.

This sequence belongs to the aerobic coproporphyrinogen-III oxidase family. In terms of assembly, homodimer. A divalent metal cation serves as cofactor.

It is found in the cytoplasm. The enzyme catalyses coproporphyrinogen III + O2 + 2 H(+) = protoporphyrinogen IX + 2 CO2 + 2 H2O. It participates in porphyrin-containing compound metabolism; protoporphyrin-IX biosynthesis; protoporphyrinogen-IX from coproporphyrinogen-III (O2 route): step 1/1. Involved in the heme biosynthesis. Catalyzes the aerobic oxidative decarboxylation of propionate groups of rings A and B of coproporphyrinogen-III to yield the vinyl groups in protoporphyrinogen-IX. The polypeptide is Oxygen-dependent coproporphyrinogen-III oxidase (Paraburkholderia phytofirmans (strain DSM 17436 / LMG 22146 / PsJN) (Burkholderia phytofirmans)).